The chain runs to 519 residues: Cytosol aminopeptidase (519 aa).

A Phosphoserine modification is found at S42. An N6-succinyllysine modification is found at K45. S54 is subject to Phosphoserine. Residues K61 and K103 each carry the N6-succinyllysine modification. 2 positions are modified to phosphoserine: S180 and S194. Residues L202 and M203 each coordinate Zn(2+). Position 221 is an N6-acetyllysine; alternate (K221). An N6-succinyllysine; alternate modification is found at K221. Residue S238 is modified to Phosphoserine. Residues K282 and D287 each coordinate Zn(2+). Residues K282, D287, S292, and K294 each contribute to the substrate site. D287 lines the Mg(2+) pocket. Residue K294 is part of the active site. The Zn(2+) site is built by R303, D305, D364, and E366. The substrate site is built by D305 and D364. Mg(2+) is bound by residues D364 and E366. R368 is an active-site residue. Residue K455 is modified to N6-acetyllysine; alternate. K455 is modified (N6-succinyllysine; alternate). Residue K476 is modified to N6-succinyllysine. Residue K489 is modified to N6-acetyllysine; alternate. N6-succinyllysine; alternate is present on K489.

Belongs to the peptidase M17 family. Homohexamer. Zn(2+) serves as cofactor. The cofactor is Mn(2+).

Its subcellular location is the cytoplasm. The enzyme catalyses Release of an N-terminal amino acid, Xaa-|-Yaa-, in which Xaa is preferably Leu, but may be other amino acids including Pro although not Arg or Lys, and Yaa may be Pro. Amino acid amides and methyl esters are also readily hydrolyzed, but rates on arylamides are exceedingly low.. The catalysed reaction is an S-substituted L-cysteinylglycine + H2O = an S-substituted L-cysteine + glycine. It catalyses the reaction L-cysteinylglycine + H2O = L-cysteine + glycine. It carries out the reaction S-benzyl-L-cysteinylglycine + H2O = S-benzyl-L-cysteine + glycine. The enzyme catalyses Release of N-terminal proline from a peptide.. With respect to regulation, bimane-S-cysteinylglycine-hydrolyzing activity is inhibited by o-phenanthroline or bestatin, and is activated by the addition of zinc chloride. In terms of biological role, cytosolic metallopeptidase that catalyzes the removal of unsubstituted N-terminal hydrophobic amino acids from various peptides. The presence of Zn(2+) ions is essential for the peptidase activity, and the association with other cofactors can modulate the substrate spectificity of the enzyme. For instance, in the presence of Mn(2+), it displays a specific Cys-Gly hydrolyzing activity of Cys-Gly-S-conjugates. Involved in the metabolism of glutathione and in the degradation of glutathione S-conjugates, which may play a role in the control of the cell redox status. The polypeptide is Cytosol aminopeptidase (Rattus norvegicus (Rat)).